A 264-amino-acid chain; its full sequence is Somatomedin-B and thrombospondin type-1 domain-containing protein (264 aa).

A signal peptide spans 1-20 (MKTLWMVLCALARLWPGALA). The SMB domain occupies 24–75 (EAGRCCPGRDPACFARGWRLDRVYGTCFCDQACRLTGDCCFDYDRACPARPC). Cystine bridges form between Cys28/Cys36, Cys28/Cys52, Cys36/Cys70, Cys50/Cys52, Cys50/Cys63, Cys56/Cys62, and Cys63/Cys70. Residues 74 to 125 (PCFVGEWSPWSGCAGQCQPTTRVRRRSVRQEPLNGGAPCPPLEERAGCLEYS) form the TSP type-1 domain. N-linked (GlcNAc...) asparagine glycosylation is present at Asn227.

This sequence belongs to the thrombospondin family.

Its subcellular location is the secreted. It localises to the extracellular space. The protein resides in the extracellular matrix. The protein is Somatomedin-B and thrombospondin type-1 domain-containing protein (Sbspon) of Mus musculus (Mouse).